Consider the following 331-residue polypeptide: Nucleotide sugar transporter SLC35B4 (331 aa).

11 consecutive transmembrane segments (helical) span residues 4–24 (ALAV…LELL), 30–50 (GCGN…GFLF), 59–79 (PAIP…VSVV), 92–112 (LHMI…IIIL), 117–137 (SIFK…CTFM), 153–173 (GFQA…ALLM), 201–221 (ALPL…AVLF), 229–249 (IPGI…NIIT), 251–267 (YVCI…CASL), 268–288 (TVTL…ILYF), and 291–311 (PFTL…LMYT). The short motif at 326 to 331 (KDNKKN) is the Mediates endoplasmic reticulum retention element.

It belongs to the nucleotide-sugar transporter family. SLC35B subfamily.

The protein resides in the endoplasmic reticulum membrane. It catalyses the reaction UDP-N-acetyl-alpha-D-glucosamine(in) + UDP-alpha-D-glucuronate(out) = UDP-N-acetyl-alpha-D-glucosamine(out) + UDP-alpha-D-glucuronate(in). The enzyme catalyses UDP-alpha-D-xylose(in) + UDP-alpha-D-glucuronate(out) = UDP-alpha-D-xylose(out) + UDP-alpha-D-glucuronate(in). In terms of biological role, antiporter that transports nucleotide sugars across the endoplasmic reticulum (ER) membrane in exchange for another nucleotide sugar. May couple UDP-alpha-D-glucuronate (UDP-GlcA) or UDP-alpha-D-xylose (UDP-Xyl) efflux to UDP-alpha-D-glucuronate (UDP-GlcA) influx into the ER lumen, which in turn stimulates glucuronidation and excretion of endobiotics and xenobiotics. The chain is Nucleotide sugar transporter SLC35B4 (SLC35B4) from Macaca fascicularis (Crab-eating macaque).